Here is a 986-residue protein sequence, read N- to C-terminus: MATTRLLFLLVVAVMITMVRSATLHYNPTVINLDRGRPKLHIGMLTSWTNADNSQGTGFPSAGAFPLAIQYANNDMDILHGYDINFEWVDTHCDINLGMAAISDWWKRGFLGVIGPGCGCTYEGRLASALNFPMIDYACDENPVSNKEFYPTFLRTIPPSIQVVDSILLTLDMYDWNQVTVVVENITKYRNVFNTMKEQFDMREEWEILHEEYYAGFDPWDPDAAEPFTDIIQRTKKTTRIYVFFGDSGDLRQFAISALDVGILNSGDYAIVGAVIDLEIRDSQDYHSLEYTLEASDYLEQINQAYEQMFKLREYTRTDDERALEAMKSVLIVTGEPVLRSQAWHIYSAIVIDNALDEPFNGTLELKTDIDMASVYIFDATTELLKALDATLQAGGDMYDGSQVVSNLFNTSYRSKAKADYQFDENGDGVKSYVLLHRIPIPVGDGGMPPGSPGMYPIGTFVRAESGHWSFNKDPDLNPVWHNRDDPPLDMPVCGFHGELCTNWGLYLGTLIPAFIIIFGGGLGYYIYRKRAYEAALDSLVWKVDWKEVQTRESETNSQGFSMKSMVLSAISVISNAEKQQIFATIGTYRGTICAIHAVHKNHIDLTRAVRTELKLMRDMRHDNICPFIGACIDRPHICILMHYCAKGSLQDIMENDDIKLDSMFLASLIADLVKGLVYLHSSEIKSHGHLKSSNCVVDNRWVLQITDYGLHEFRKGQKEDVDLGEHAKLARKLWTAPEHLREGKSMHPGGTPKGDIYSFSIILTEMYSRQEPFHENDLELADIIARVSKGEVPPYRPVLNAVNEAAPDCVLTAIRACWVEDPMERPNIIEVRTMLAPLQKGLKPNILDNMIAIMERYTNNLEELVDERTQELQKEKAKTEQLLHRMLPPSIASQLIKGISVLPETFDMVSIFFSDIVGFLIHFSLSSCRLFCSSQVLPLLVPWLHSLLTLPLHLPLIWMNPLISSFAQPSWSALHSHSCSALHSS.

Residues 1-21 form the signal peptide; the sequence is MATTRLLFLLVVAVMITMVRS. The Extracellular segment spans residues 22–507; it reads ATLHYNPTVI…GELCTNWGLY (486 aa). Residues Asn185, Asn361, and Asn410 are each glycosylated (N-linked (GlcNAc...) asparagine). The chain crosses the membrane as a helical span at residues 508 to 528; that stretch reads LGTLIPAFIIIFGGGLGYYIY. Topologically, residues 529 to 986 are cytoplasmic; it reads RKRAYEAALD…SHSCSALHSS (458 aa). One can recognise a Protein kinase domain in the interval 568 to 836; the sequence is LSAISVISNA…PNIIEVRTML (269 aa).

The protein resides in the membrane. The catalysed reaction is GTP = 3',5'-cyclic GMP + diphosphate. Its function is as follows. Implicated as a cell-surface receptor on spermatozoa for 'resact' a chemotactic peptide, and on various other cells as a receptor for atrial natriuretic peptide. The protein is Resact receptor of Arbacia punctulata (Punctuate sea urchin).